The chain runs to 549 residues: MLTFHRIIRKGWMFLLAFLLTALLFCPTGQPAKAAAPFNGTMMQYFEWYLPDDGTLWTKVANEANNLSSLGITALWLPPAYKGTSRSDVGYGVYDLYDLGEFNQKGAVRTKYGTKAQYLQAIQAAHAAGMQVYADVVFDHKGGADGTEWVDAVEVNPSDRNQEISGTYQIQAWTKFDFPGRGNTYSSFKWRWYHFDGVDWDESRKLSRIYKFRGIGKAWDWEVDTENGNYDYLMYADLDMDHPEVVTELKSWGKWYVNTTNIDGFRLDAVKHIKFSFFPDWLSDVRSQTGKPLFTVGEYWSYDINKLHNYIMKTNGTMSLFDAPLHNKFYTASKSGGTFDMRTLMTNTLMKDQPTLAVTFVDNHDTEPGQALQSWVDPWFKPLAYAFILTRQEGYPCVFYGDYYGIPQYNIPSLKSKIDPLLIARRDYAYGTQHDYLDHSDIIGWTREGVTEKPGSGLAALITDGPGGSKWMYVGKQHAGKVFYDLTGNRSDTVTINSDGWGEFKVNGGSVSVWVPRKTTVSTIAWSITTRPWTDEFVRWTEPRLVAWP.

The signal sequence occupies residues 1–34 (MLTFHRIIRKGWMFLLAFLLTALLFCPTGQPAKA). Positions 139, 196, 218, 220, 231, and 237 each coordinate Ca(2+). Position 196 (Asp-196) interacts with Na(+). Asp-220, Asp-231, Asp-237, and Leu-238 together coordinate Na(+). Asp-239 is a Ca(2+) binding site. Asp-268 acts as the Nucleophile in catalysis. His-272 contacts Ca(2+). The active-site Proton donor is the Glu-298. The Ca(2+) site is built by Gly-337, Phe-339, Ser-440, Asp-441, and Asp-464.

Belongs to the glycosyl hydrolase 13 family. Monomer. The cofactor is Ca(2+). Na(+) serves as cofactor.

The protein localises to the secreted. The catalysed reaction is Endohydrolysis of (1-&gt;4)-alpha-D-glucosidic linkages in polysaccharides containing three or more (1-&gt;4)-alpha-linked D-glucose units.. This is Alpha-amylase (amyS) from Geobacillus stearothermophilus (Bacillus stearothermophilus).